A 338-amino-acid chain; its full sequence is S-adenosylmethionine:tRNA ribosyltransferase-isomerase (338 aa).

It belongs to the QueA family. As to quaternary structure, monomer.

It is found in the cytoplasm. The enzyme catalyses 7-aminomethyl-7-carbaguanosine(34) in tRNA + S-adenosyl-L-methionine = epoxyqueuosine(34) in tRNA + adenine + L-methionine + 2 H(+). It participates in tRNA modification; tRNA-queuosine biosynthesis. Functionally, transfers and isomerizes the ribose moiety from AdoMet to the 7-aminomethyl group of 7-deazaguanine (preQ1-tRNA) to give epoxyqueuosine (oQ-tRNA). This Francisella tularensis subsp. tularensis (strain WY96-3418) protein is S-adenosylmethionine:tRNA ribosyltransferase-isomerase.